Reading from the N-terminus, the 121-residue chain is Trypsin/alpha-amylase inhibitor CMX1/CMX3 (121 aa).

The signal sequence occupies residues 1–24 (MAFKHQLILSTAILLAVLAAASAS).

It belongs to the protease inhibitor I6 (cereal trypsin/alpha-amylase inhibitor) family.

The protein resides in the secreted. This Triticum aestivum (Wheat) protein is Trypsin/alpha-amylase inhibitor CMX1/CMX3.